A 740-amino-acid chain; its full sequence is Platelet endothelial cell adhesion molecule (740 aa).

Positions 1–27 (MRLRWTQGGNMWLGVLLTLQLCSSLEG) are cleaved as a signal peptide. The Extracellular segment spans residues 28 to 602 (QENSFTINSI…VRVYLAPWKK (575 aa)). 3 Ig-like C2-type domains span residues 35–126 (NSIH…YKVV), 145–223 (GGVV…DSVR), and 236–315 (PKFH…SKVS). N-linked (GlcNAc...) asparagine glycosylation is found at asparagine 52 and asparagine 84. Cystine bridges form between cysteine 57–cysteine 109, cysteine 152–cysteine 206, and cysteine 256–cysteine 304. Asparagine 284, asparagine 301, asparagine 320, asparagine 357, asparagine 372, asparagine 436, asparagine 456, and asparagine 552 each carry an N-linked (GlcNAc...) asparagine glycan. 3 consecutive Ig-like C2-type domains span residues 328-404 (PKLK…VQIA), 425-494 (GQTI…KVLR), and 500-592 (PVEE…NILA). Disulfide bonds link cysteine 347–cysteine 387, cysteine 432–cysteine 477, and cysteine 524–cysteine 573. The chain crosses the membrane as a helical span at residues 603–621 (GLIAVVVIAVIIAVLLLGA). The Cytoplasmic portion of the chain corresponds to 622-740 (RFYFLKKSKA…SRTEGSLDGT (119 aa)). 2 short sequence motifs (ITIM motif) span residues 690-695 (VEYTEV) and 713-718 (TVYSEI). Tyrosine 692 and tyrosine 715 each carry phosphotyrosine; by FER. Residues 697–740 (VTSPEPHRGLGTKGTETVYSEIRKADPDLVENRYSRTEGSLDGT) form a disordered region. Positions 711 to 731 (TETVYSEIRKADPDLVENRYS) are membrane-bound segment which detaches upon phosphorylation. Basic and acidic residues predominate over residues 717 to 732 (EIRKADPDLVENRYSR). The tract at residues 723-740 (PDLVENRYSRTEGSLDGT) is may play a role in cytoprotective signaling. Phosphoserine is present on residues serine 731 and serine 736.

In terms of assembly, trans-homodimer (via Ig-like C2-type 1 and Ig-like C2-type 2 domains); trans-homodimerization is required for cell-cell interaction. Forms a complex with BDKRB2 and GNAQ. Interacts with BDKRB2 and GNAQ. Interacts with PTPN11; Tyr-715 is critical for PTPN11 recruitment. Interacts with FER. Interacts with CD177; the interaction is Ca(2+)-dependent; the interaction is direct. In terms of processing, phosphorylated on Ser and Tyr residues by src kinases after cellular activation. Upon activation, phosphorylated on Ser-731 which probably initiates the dissociation of the membrane-interaction segment (residues 711-731) from the cell membrane allowing the sequential phosphorylation of Tyr-715 and Tyr-692. Constitutively phosphorylated on Ser-736 in resting platelets. Phosphorylated on tyrosine residues by FER and FES in response to FCER1 activation. In endothelial cells Fyn mediates mechanical-force (stretch or pull) induced tyrosine phosphorylation. Palmitoylation by ZDHHC21 is necessary for cell surface expression in endothelial cells and enrichment in membrane rafts.

The protein localises to the cell membrane. It is found in the membrane raft. It localises to the cell junction. In terms of biological role, cell adhesion molecule which is required for leukocyte transendothelial migration (TEM) under most inflammatory conditions. Tyr-692 plays a critical role in TEM and is required for efficient trafficking of PECAM1 to and from the lateral border recycling compartment (LBRC) and is also essential for the LBRC membrane to be targeted around migrating leukocytes. Trans-homophilic interaction may play a role in endothelial cell-cell adhesion via cell junctions. Heterophilic interaction with CD177 plays a role in transendothelial migration of neutrophils. Homophilic ligation of PECAM1 prevents macrophage-mediated phagocytosis of neighboring viable leukocytes by transmitting a detachment signal. Promotes macrophage-mediated phagocytosis of apoptotic leukocytes by tethering them to the phagocytic cells; PECAM1-mediated detachment signal appears to be disabled in apoptotic leukocytes. Modulates bradykinin receptor BDKRB2 activation. Regulates bradykinin- and hyperosmotic shock-induced ERK1/2 activation in endothelial cells. Induces susceptibility to atherosclerosis. This Sus scrofa (Pig) protein is Platelet endothelial cell adhesion molecule (PECAM1).